Reading from the N-terminus, the 203-residue chain is ATP-dependent Clp protease proteolytic subunit (203 aa).

Ser-100 acts as the Nucleophile in catalysis. The active site involves His-125.

The protein belongs to the peptidase S14 family. In terms of assembly, fourteen ClpP subunits assemble into 2 heptameric rings which stack back to back to give a disk-like structure with a central cavity, resembling the structure of eukaryotic proteasomes.

It is found in the cytoplasm. It catalyses the reaction Hydrolysis of proteins to small peptides in the presence of ATP and magnesium. alpha-casein is the usual test substrate. In the absence of ATP, only oligopeptides shorter than five residues are hydrolyzed (such as succinyl-Leu-Tyr-|-NHMec, and Leu-Tyr-Leu-|-Tyr-Trp, in which cleavage of the -Tyr-|-Leu- and -Tyr-|-Trp bonds also occurs).. In terms of biological role, cleaves peptides in various proteins in a process that requires ATP hydrolysis. Has a chymotrypsin-like activity. Plays a major role in the degradation of misfolded proteins. This is ATP-dependent Clp protease proteolytic subunit from Anaeromyxobacter sp. (strain K).